Consider the following 911-residue polypeptide: Zinc finger protein 721 (911 aa).

The C2H2-type 1; degenerate zinc-finger motif lies at 69–91; the sequence is FQCNARVKVFSKFANSNKDKTRH. A C2H2-type 2 zinc finger spans residues 97 to 119; it reads FKCNECGKSFQKFSDLTQHKGIH. Residues 125–147 form a C2H2-type 3; degenerate zinc finger; that stretch reads YTCEERGKDFGWYTDLNQHKKIH. Residues 153-175 form a C2H2-type 4 zinc finger; sequence YKCEECGKAFNRSTNLTAHKRIH. A C2H2-type 5; degenerate zinc finger spans residues 181–203; the sequence is YTGEDRDRAFGWSTNLNEYKKIH. 7 C2H2-type zinc fingers span residues 209 to 231, 237 to 259, 265 to 287, 293 to 315, 321 to 343, 349 to 371, and 377 to 399; these read YKCK…EKIH, YKCK…KRIH, FKCL…RRIH, YTCE…RRIH, YTCG…RRIH, YKCE…KKIH, and YKCE…KRIH. The segment at 405–427 adopts a C2H2-type 13; degenerate zinc-finger fold; that stretch reads YTCEDRGRAFGLSTNLNEYKKIH. 6 C2H2-type zinc fingers span residues 433-455, 461-483, 489-511, 517-539, 545-567, and 573-595; these read YKCK…EKIH, YKCK…KRIH, FECL…RRIH, YTCE…RRIH, and YKCE…KKIH. A Glycyl lysine isopeptide (Lys-Gly) (interchain with G-Cter in SUMO2) cross-link involves residue Lys-478. Residues 601-623 form a C2H2-type 20; degenerate zinc finger; sequence YKCEECGKDFVWYTDLNQQKKIY. A C2H2-type 21; degenerate zinc finger spans residues 629–651; the sequence is YKCEECGKAFAPSTDLNQHTKIL. Lys-649 participates in a covalent cross-link: Glycyl lysine isopeptide (Lys-Gly) (interchain with G-Cter in SUMO2). 2 C2H2-type zinc fingers span residues 657 to 679 and 685 to 707; these read YKCE…KKIH and YKCE…RRVH. The C2H2-type 24; degenerate zinc finger occupies 713–735; the sequence is YKCEDRGRSFGWSTNLNEYKKIH. 6 C2H2-type zinc fingers span residues 741 to 763, 769 to 791, 797 to 819, 825 to 847, 853 to 875, and 881 to 903; these read YKCK…EKIH, YKCK…KRIH, FKCL…RRIH, YTCE…RRIH, and YTCG…KKIH. Residue Lys-786 forms a Glycyl lysine isopeptide (Lys-Gly) (interchain with G-Cter in SUMO2) linkage.

It belongs to the krueppel C2H2-type zinc-finger protein family.

It is found in the nucleus. In terms of biological role, may be involved in transcriptional regulation. The polypeptide is Zinc finger protein 721 (ZNF721) (Homo sapiens (Human)).